A 76-amino-acid polypeptide reads, in one-letter code: Sea anemone sodium channel inhibitor type I (76 aa).

A signal peptide spans 1-19 (MNRMLIIFVVVTVFGLASG). Positions 20 to 30 (LGPNMPAPDLA) are excised as a propeptide. 3 cysteine pairs are disulfide-bonded: Cys37-Cys72, Cys39-Cys60, and Cys53-Cys73.

The protein belongs to the sea anemone sodium channel inhibitory toxin family. Type I subfamily. In terms of tissue distribution, expressed in acontia, a specialised envenomation structure laden with batteries of venom-containing nematocysts found only in the superfamily Metridioidea.

The protein resides in the secreted. It localises to the nematocyst. Its function is as follows. May affect sodium channels (Nav). The sequence is that of Sea anemone sodium channel inhibitor type I from Calliactis polypus (Hermit crab anemone).